The sequence spans 269 residues: Tryptophan synthase alpha chain (269 aa).

Catalysis depends on proton acceptor residues glutamate 49 and aspartate 60.

It belongs to the TrpA family. As to quaternary structure, tetramer of two alpha and two beta chains.

The enzyme catalyses (1S,2R)-1-C-(indol-3-yl)glycerol 3-phosphate + L-serine = D-glyceraldehyde 3-phosphate + L-tryptophan + H2O. It participates in amino-acid biosynthesis; L-tryptophan biosynthesis; L-tryptophan from chorismate: step 5/5. In terms of biological role, the alpha subunit is responsible for the aldol cleavage of indoleglycerol phosphate to indole and glyceraldehyde 3-phosphate. In Pseudomonas putida (strain ATCC 47054 / DSM 6125 / CFBP 8728 / NCIMB 11950 / KT2440), this protein is Tryptophan synthase alpha chain.